We begin with the raw amino-acid sequence, 160 residues long: Putative pre-16S rRNA nuclease (160 aa).

This sequence belongs to the YqgF nuclease family.

The protein localises to the cytoplasm. In terms of biological role, could be a nuclease involved in processing of the 5'-end of pre-16S rRNA. In Gluconobacter oxydans (strain 621H) (Gluconobacter suboxydans), this protein is Putative pre-16S rRNA nuclease.